A 101-amino-acid chain; its full sequence is Small ribosomal subunit protein uS14 (101 aa).

The tract at residues Met1–Asp20 is disordered. Residues Lys11–Asp20 are compositionally biased toward basic and acidic residues.

Belongs to the universal ribosomal protein uS14 family. As to quaternary structure, part of the 30S ribosomal subunit. Contacts proteins S3 and S10.

Its function is as follows. Binds 16S rRNA, required for the assembly of 30S particles and may also be responsible for determining the conformation of the 16S rRNA at the A site. This Granulibacter bethesdensis (strain ATCC BAA-1260 / CGDNIH1) protein is Small ribosomal subunit protein uS14.